Here is a 345-residue protein sequence, read N- to C-terminus: MGILGASGYGGAELLRLLKAHPEVELVGFSSRKYEGRPLEAAWPQLWDGRLFAAQEEVLERAEVVFLALPNGLSMEIAPEALKAGKRVVDLSGDFRLPPEVYEAWYRIPHKSPDLYREAVYGLPELHREELKGARLVANPGCYVTAATLALAPLAAEGVLKGAFVVGLSGVSGAGREAEGTAFAEVNENLKPYKAGGTHRHIPEMERNLGRILAQGRRVRTHGEARAVRLSFTPHLVPMTRGILVTAEAEVEGAWSQESLEALYRDFYAGEPFVRVLKGLPETKATLGSNRVDVRPLYEERTGRVLVFAALDNLVKGMAGQAVQNLNLMLGLPEETALPKEGLWP.

Cysteine 142 is a catalytic residue.

It belongs to the NAGSA dehydrogenase family. Type 1 subfamily.

The protein resides in the cytoplasm. The enzyme catalyses N-acetyl-L-glutamate 5-semialdehyde + phosphate + NADP(+) = N-acetyl-L-glutamyl 5-phosphate + NADPH + H(+). It participates in amino-acid biosynthesis; L-arginine biosynthesis; N(2)-acetyl-L-ornithine from L-glutamate: step 3/4. Its function is as follows. Catalyzes the NADPH-dependent reduction of N-acetyl-5-glutamyl phosphate to yield N-acetyl-L-glutamate 5-semialdehyde. The chain is N-acetyl-gamma-glutamyl-phosphate reductase from Thermus thermophilus (strain ATCC BAA-163 / DSM 7039 / HB27).